The primary structure comprises 276 residues: MVVKIGILKCGNIGMSPIIDLCLDERADRNDIDVRVLGSGAKMNPDQVEEVSKKMVEEKPDFIVYIGPNPAAPGPKKAREILAASGIPSVIIGDAPGIKDKDAMAEQGLGYVLIKCDPMIGARRQFLDPVEMAMFNADVIRVLAGTGALRVVQNAIDEMVFAVEEGKEISLPKIVITEQKAVDAMDFANPYAKAKAMAAFVMAEKTADIDVKGCFMTKEMEKYIPIVASAHETIRYAAKMVDEARELEKATDAVSRKPHAGDGKILNKCKLMEKPE.

The protein belongs to the MTD family.

The catalysed reaction is 5,10-methylenetetrahydromethanopterin + oxidized coenzyme F420-(gamma-L-Glu)(n) + 2 H(+) = 5,10-methenyl-5,6,7,8-tetrahydromethanopterin + reduced coenzyme F420-(gamma-L-Glu)(n). Its pathway is one-carbon metabolism; methanogenesis from CO(2); 5,10-methylene-5,6,7,8-tetrahydromethanopterin from 5,10-methenyl-5,6,7,8-tetrahydromethanopterin (coenzyme F420 route): step 1/1. Its function is as follows. Catalyzes the reversible reduction of methenyl-H(4)MPT(+) to methylene-H(4)MPT. This chain is F420-dependent methylenetetrahydromethanopterin dehydrogenase, found in Methanococcus vannielii (strain ATCC 35089 / DSM 1224 / JCM 13029 / OCM 148 / SB).